A 140-amino-acid polypeptide reads, in one-letter code: MLKEFQEFISKGNVMDLAVGVIIGAAFGKIVDSLVNDIIMPVIGAIFGGLDFNNYFVGLSSAVNATSLADAKKQGAVFAYGSFITVALNFVILAFIIFLMVKAVNNLRRRLEREKPATPAAPPPADVALLTEIRDLLARR.

The next 3 membrane-spanning stretches (helical) occupy residues 8–28, 30–50, and 81–101; these read FISKGNVMDLAVGVIIGAAFG, IVDSLVNDIIMPVIGAIFGGL, and GSFITVALNFVILAFIIFLMV.

Belongs to the MscL family. As to quaternary structure, homopentamer.

It is found in the cell inner membrane. In terms of biological role, channel that opens in response to stretch forces in the membrane lipid bilayer. May participate in the regulation of osmotic pressure changes within the cell. This is Large-conductance mechanosensitive channel 2 from Mesorhizobium japonicum (strain LMG 29417 / CECT 9101 / MAFF 303099) (Mesorhizobium loti (strain MAFF 303099)).